The chain runs to 554 residues: MSSVGIASASLWLRGPVKSALKGRWLSCEQMRRYGTKSAPAVRKGGHSKKARQAPSLPFVFGRHKQLTGPEFTRRTRIGNLSDKITKFEQLKLLPEVREVMMKVIASESVLNKSLDDEDCGLDDKRVAAFLGQVQPTPIQTAVIKKMAKTLMEPQLQVHMVAAETGSGKTMSYLMPLVDYLKQEEQAAGTEEGRARLGALRSLILVPTHELVEQVYMTLEKLQEPLQLKTFKLDRDTPYKDIVEAFKGRVDIMVTTPGKLRGLFKIRMLHRPDRILSQVRFAVVDEADTLMDQSWVQETYSCIKSLRDANHLVFCSASVPMEFEKAMNKLFPNLQVVASEKLHRINKHSNIKIINVALRPYNGSKMKALAQALYAIMKDGTSEGYEKRCVVFVNEADSVNSIVDTLRDKFGHDVHGLTGEHSLDDRLATIAPFMRSPPRIQDQVRPSELKKPQERRLPNSNIKVADSKDNGQRSVSSPLKVLVTTDVLSRGINFKGVKHVILYDVPAKSIDLVHRVGRTSRMNERGHVYIFVGKKGSAQAKGLNPVVKKNRPIQ.

A mitochondrion-targeting transit peptide spans 1 to 54 (MSSVGIASASLWLRGPVKSALKGRWLSCEQMRRYGTKSAPAVRKGGHSKKARQA). The Q motif signature appears at 119 to 140 (DCGLDDKRVAAFLGQVQPTPIQ). The Helicase ATP-binding domain maps to 150–337 (TLMEPQLQVH…NKLFPNLQVV (188 aa)). Position 163-170 (163-170 (AETGSGKT)) interacts with ATP. The DEAD box motif lies at 285 to 288 (DEAD). The Helicase C-terminal domain occupies 368 to 554 (ALAQALYAIM…PVVKKNRPIQ (187 aa)). Residues 439–474 (RIQDQVRPSELKKPQERRLPNSNIKVADSKDNGQRS) form a disordered region. The segment covering 445 to 457 (RPSELKKPQERRL) has biased composition (basic and acidic residues).

Belongs to the DEAD box helicase family. MRH4 subfamily.

It localises to the mitochondrion. The catalysed reaction is ATP + H2O = ADP + phosphate + H(+). ATP-binding RNA helicase involved in mitochondrial RNA metabolism. Required for maintenance of mitochondrial DNA. This chain is ATP-dependent RNA helicase MRH4, mitochondrial (MRH4), found in Eremothecium gossypii (strain ATCC 10895 / CBS 109.51 / FGSC 9923 / NRRL Y-1056) (Yeast).